The chain runs to 139 residues: Protein archease (139 aa).

Ca(2+)-binding residues include Asp12, Asp138, and Ile139.

It belongs to the archease family.

Activates the tRNA-splicing ligase complex by facilitating the enzymatic turnover of catalytic subunit RtcB. Acts by promoting the guanylylation of RtcB, a key intermediate step in tRNA ligation. Can also alter the NTP specificity of RtcB such that ATP, dGTP or ITP is used efficiently. This chain is Protein archease, found in Saccharolobus islandicus (strain Y.N.15.51 / Yellowstone #2) (Sulfolobus islandicus).